Consider the following 198-residue polypeptide: Putative undecaprenyl-diphosphatase YbjG (198 aa).

The Cytoplasmic portion of the chain corresponds to 1 to 27 (MLENLNLSLFSLINATPDSAPWMISLA). Residues 28 to 48 (IFIAKDLITVVPLLAVVLWLW) traverse the membrane as a helical segment. Over 49–57 (GLTAQRQLV) the chain is Periplasmic. A helical membrane pass occupies residues 58 to 78 (IKIAIALAVSLFVSWTMGHLF). The Cytoplasmic segment spans residues 79 to 120 (PHDRPFVENIGYNFLHHAADDSFPSDHGTVIFTFALAFLCWH). Residues 121 to 143 (RLWSGSLLMVLAVVIAWSRVYLG) traverse the membrane as a helical segment. Over 144–149 (VHWPLD) the chain is Periplasmic. The helical transmembrane segment at 150 to 172 (MLGGLLAGMIGCLSAQIIWQAMG) threads the bilayer. Residues 173-198 (HKLYQRLQSWYRVCFALPIRKGWVRD) are Cytoplasmic-facing.

Belongs to the BcrC/YbjG family.

The protein resides in the cell inner membrane. It carries out the reaction di-trans,octa-cis-undecaprenyl diphosphate + H2O = di-trans,octa-cis-undecaprenyl phosphate + phosphate + H(+). Its function is as follows. Overexpression leads to increased undecaprenyl diphosphatase activity and to increased resistance to bacitracin. May have a preferred substrate other than undecaprenyl diphosphate in vivo. This chain is Putative undecaprenyl-diphosphatase YbjG (ybjG), found in Escherichia coli (strain K12).